A 273-amino-acid polypeptide reads, in one-letter code: Secretory carrier-associated membrane protein 6 (273 aa).

A disordered region spans residues 1-69 (MHHDPNPFDE…MGDSKSKARE (69 aa)). Residues 1-131 (MHHDPNPFDE…LQKLQYLAFA (131 aa)) lie on the Cytoplasmic side of the membrane. Residues 20–30 (NGGGGGGGGGS) show a composition bias toward gly residues. Positions 68 to 94 (RELSSWETDLKRREADIKRREEALRNA) form a coiled coil. 4 helical membrane-spanning segments follow: residues 132 to 152 (SWLG…VCWI), 159 to 179 (LFFL…LIWY), 194 to 214 (FGWF…AAIA), and 239 to 259 (IIGI…LLSI). At 260-273 (GVLQRVYMYFRGNK) the chain is on the cytoplasmic side.

This sequence belongs to the SCAMP family.

It is found in the cell membrane. The protein localises to the cytoplasmic vesicle. Its subcellular location is the secretory vesicle membrane. Probably involved in membrane trafficking. This chain is Secretory carrier-associated membrane protein 6 (SCAMP6), found in Oryza sativa subsp. japonica (Rice).